We begin with the raw amino-acid sequence, 241 residues long: Phosphoadenosine 5'-phosphosulfate reductase (241 aa).

The active-site Nucleophile; cysteine thiosulfonate intermediate is the Cys-235.

The protein belongs to the PAPS reductase family. CysH subfamily.

It is found in the cytoplasm. The enzyme catalyses [thioredoxin]-disulfide + sulfite + adenosine 3',5'-bisphosphate + 2 H(+) = [thioredoxin]-dithiol + 3'-phosphoadenylyl sulfate. The protein operates within sulfur metabolism; hydrogen sulfide biosynthesis; sulfite from sulfate: step 3/3. Catalyzes the formation of sulfite from phosphoadenosine 5'-phosphosulfate (PAPS) using thioredoxin as an electron donor. This chain is Phosphoadenosine 5'-phosphosulfate reductase, found in Xanthomonas euvesicatoria pv. vesicatoria (strain 85-10) (Xanthomonas campestris pv. vesicatoria).